We begin with the raw amino-acid sequence, 401 residues long: Bifunctional D-cysteine desulfhydrase/1-aminocyclopropane-1-carboxylate deaminase, mitochondrial (401 aa).

Residues 1–37 (MRGRSLTLSRVKLELARRSMSATSVPSMADFLTKKPY) constitute a mitochondrion transit peptide. An N-acetylserine modification is found at Arg2. Lys93 is subject to N6-(pyridoxal phosphate)lysine. Ser120 functions as the Nucleophile in the catalytic mechanism.

This sequence belongs to the ACC deaminase/D-cysteine desulfhydrase family. Requires pyridoxal 5'-phosphate as cofactor. Highly expressed in stems and cauline leaves, and at lower levels in roots, rosette leaves and flowers.

The protein resides in the mitochondrion. It catalyses the reaction D-cysteine + H2O = hydrogen sulfide + pyruvate + NH4(+) + H(+). The catalysed reaction is 1-aminocyclopropane-1-carboxylate + H2O = 2-oxobutanoate + NH4(+). Its function is as follows. Catalyzes the production of hydrogen sulfide (H2S) from cysteine. Is mainly responsible for the degradation of cysteine to generate H2S, a regulator of stomatal movement and closure. Has high affinity for D-cysteine. In terms of biological role, possesses 1-aminocyclopropane-1-carboxylic acid (ACC) deaminase activity. Acts as a regulator of ACC levels and causes changes in ethylene levels. In Arabidopsis thaliana (Mouse-ear cress), this protein is Bifunctional D-cysteine desulfhydrase/1-aminocyclopropane-1-carboxylate deaminase, mitochondrial (DCD).